The sequence spans 148 residues: HTH-type transcriptional regulator BilQ (148 aa).

The HTH marR-type domain maps to 1–140 (MDFKNLQYES…LVKNLHVVKD (140 aa)). Positions 54–77 (LNDVSTEFEVDKAHTTRTISRLEQ) form a DNA-binding region, H-T-H motif.

Its function is as follows. Transcription regulator that regulates expression of the bilirubin reductase operon (bilQ, bilR and bilS). In Clostridioides difficile (strain CD3), this protein is HTH-type transcriptional regulator BilQ.